We begin with the raw amino-acid sequence, 114 residues long: Mediator of RNA polymerase II transcription subunit 11 (114 aa).

Residues 28–61 adopt a coiled-coil conformation; sequence LELSKEKANASLLDRQLNQFQTSINRVESELSSQ.

Belongs to the Mediator complex subunit 11 family. In terms of assembly, component of the Mediator complex. Ubiquitously expressed at early stage of development. After fertilization expressed in head region as well as in lateral line primordium.

It is found in the nucleus. In terms of biological role, component of the Mediator complex, a coactivator involved in the regulated transcription of nearly all RNA polymerase II-dependent genes. Mediator functions as a bridge to convey information from gene-specific regulatory proteins to the basal RNA polymerase II transcription machinery. Mediator is recruited to promoters by direct interactions with regulatory proteins and serves as a scaffold for the assembly of a functional pre-initiation complex with RNA polymerase II and the general transcription factors. This Danio rerio (Zebrafish) protein is Mediator of RNA polymerase II transcription subunit 11 (med11).